A 365-amino-acid polypeptide reads, in one-letter code: Flagellar P-ring protein (365 aa).

Residues 1–19 form the signal peptide; it reads MIKFLSALILLLVTTAAQA.

This sequence belongs to the FlgI family. The basal body constitutes a major portion of the flagellar organelle and consists of four rings (L,P,S, and M) mounted on a central rod.

It is found in the periplasm. Its subcellular location is the bacterial flagellum basal body. Its function is as follows. Assembles around the rod to form the L-ring and probably protects the motor/basal body from shearing forces during rotation. The chain is Flagellar P-ring protein from Escherichia coli O9:H4 (strain HS).